The sequence spans 366 residues: tRNA/tmRNA (uracil-C(5))-methyltransferase (366 aa).

The S-adenosyl-L-methionine site is built by Gln-190, Tyr-218, Asn-223, Glu-239, and Asp-299. Cys-324 (nucleophile) is an active-site residue. The active-site Proton acceptor is Glu-358.

This sequence belongs to the class I-like SAM-binding methyltransferase superfamily. RNA M5U methyltransferase family. TrmA subfamily.

It carries out the reaction uridine(54) in tRNA + S-adenosyl-L-methionine = 5-methyluridine(54) in tRNA + S-adenosyl-L-homocysteine + H(+). The catalysed reaction is uridine(341) in tmRNA + S-adenosyl-L-methionine = 5-methyluridine(341) in tmRNA + S-adenosyl-L-homocysteine + H(+). Functionally, dual-specificity methyltransferase that catalyzes the formation of 5-methyluridine at position 54 (m5U54) in all tRNAs, and that of position 341 (m5U341) in tmRNA (transfer-mRNA). In Salmonella agona (strain SL483), this protein is tRNA/tmRNA (uracil-C(5))-methyltransferase.